Reading from the N-terminus, the 330-residue chain is tRNA U34 carboxymethyltransferase (330 aa).

Carboxy-S-adenosyl-L-methionine contacts are provided by residues K98, W112, K117, G137, 187 to 188, M203, Y207, and R322; that span reads ME. The tract at residues 309-330 is disordered; sequence NPSKTIEGYPGPKRATLIAEKP.

Belongs to the class I-like SAM-binding methyltransferase superfamily. CmoB family. Homotetramer.

It carries out the reaction carboxy-S-adenosyl-L-methionine + 5-hydroxyuridine(34) in tRNA = 5-carboxymethoxyuridine(34) in tRNA + S-adenosyl-L-homocysteine + H(+). Functionally, catalyzes carboxymethyl transfer from carboxy-S-adenosyl-L-methionine (Cx-SAM) to 5-hydroxyuridine (ho5U) to form 5-carboxymethoxyuridine (cmo5U) at position 34 in tRNAs. This chain is tRNA U34 carboxymethyltransferase, found in Marinobacter nauticus (strain ATCC 700491 / DSM 11845 / VT8) (Marinobacter aquaeolei).